Reading from the N-terminus, the 215-residue chain is Pyrrolidone-carboxylate peptidase (215 aa).

Active-site residues include Glu78, Cys141, and His165.

This sequence belongs to the peptidase C15 family. Homotetramer.

The protein localises to the cytoplasm. It carries out the reaction Release of an N-terminal pyroglutamyl group from a polypeptide, the second amino acid generally not being Pro.. In terms of biological role, removes 5-oxoproline from various penultimate amino acid residues except L-proline. This chain is Pyrrolidone-carboxylate peptidase, found in Lactobacillus johnsonii (strain CNCM I-12250 / La1 / NCC 533).